A 102-amino-acid polypeptide reads, in one-letter code: Protein S100-A11 (102 aa).

At serine 2 the chain carries Phosphoserine. At threonine 7 the chain carries Phosphothreonine. EF-hand domains lie at 12-47 and 52-87; these read ESLIAVFQKYAGKDGHSVTLSKTEFLSFMNTELAAF and KDPGVLDRMMKKLDLNSDGQLDFQEFLNLIGGLAVA. Lysine 24 carries the N6-acetyllysine modification. Ca(2+) is bound by residues serine 28, threonine 30, glutamate 35, aspartate 65, asparagine 67, aspartate 69, glutamine 71, and glutamate 76.

Belongs to the S-100 family. In terms of assembly, homodimer; disulfide-linked. In terms of processing, phosphorylation at Thr-7 significantly suppresses homodimerization and promotes association with NCL/nucleolin which induces nuclear translocation. Smooth muscle and non-muscle tissues.

Its subcellular location is the cytoplasm. The protein resides in the nucleus. Functionally, facilitates the differentiation and the cornification of keratinocytes. The chain is Protein S100-A11 (S100A11) from Oryctolagus cuniculus (Rabbit).